Reading from the N-terminus, the 150-residue chain is Ribonuclease HI (150 aa).

The region spanning 1 to 141 is the RNase H type-1 domain; the sequence is MKLINAYTDG…VDVLARGQAM (141 aa). Mg(2+) is bound by residues Asp-9, Glu-47, Asp-69, and Asp-133.

The protein belongs to the RNase H family. In terms of assembly, monomer. The cofactor is Mg(2+).

It localises to the cytoplasm. It catalyses the reaction Endonucleolytic cleavage to 5'-phosphomonoester.. In terms of biological role, endonuclease that specifically degrades the RNA of RNA-DNA hybrids. This Xylella fastidiosa (strain Temecula1 / ATCC 700964) protein is Ribonuclease HI.